The sequence spans 182 residues: ATP-dependent protease subunit HslV (182 aa).

The active site involves Thr-12. Positions 167, 170, and 173 each coordinate Na(+).

The protein belongs to the peptidase T1B family. HslV subfamily. As to quaternary structure, a double ring-shaped homohexamer of HslV is capped on each side by a ring-shaped HslU homohexamer. The assembly of the HslU/HslV complex is dependent on binding of ATP.

It is found in the cytoplasm. It carries out the reaction ATP-dependent cleavage of peptide bonds with broad specificity.. With respect to regulation, allosterically activated by HslU binding. Functionally, protease subunit of a proteasome-like degradation complex believed to be a general protein degrading machinery. The protein is ATP-dependent protease subunit HslV of Acidiphilium cryptum (strain JF-5).